The primary structure comprises 236 residues: 3-oxoacyl-[acyl-carrier-protein] reductase (236 aa).

Met1 is subject to N-acetylmethionine. Residues 11–14 and 34–35 each bind NADP(+); these read SRGI and RN. Lys40 is modified (N6-acetyllysine). 83–85 is a binding site for NADP(+); that stretch reads AAG. Residue Lys96 is modified to N6-acetyllysine. Ser134 contributes to the substrate binding site. NADP(+)-binding positions include Tyr147, Lys151, and 180–182; that span reads IHT. Tyr147 acts as the Proton acceptor in catalysis. Lys194 carries the post-translational modification N6-acetyllysine.

This sequence belongs to the short-chain dehydrogenases/reductases (SDR) family. In terms of assembly, homotetramer (in vitro). Heterotetramer with HSD17B8; contains two molecules each of HSD17B8 and CBR4. Does not form homotetramers when HSD17B8 is coexpressed, only heterotetramers (in vitro).

Its subcellular location is the mitochondrion matrix. The enzyme catalyses a (3R)-hydroxyacyl-[ACP] + NADP(+) = a 3-oxoacyl-[ACP] + NADPH + H(+). It catalyses the reaction a quinone + NADPH + H(+) = a quinol + NADP(+). Its pathway is lipid metabolism; fatty acid biosynthesis. Functionally, component of the heterotetramer complex KAR (3-ketoacyl-[acyl carrier protein] reductase or 3-ketoacyl-[ACP] reductase) that forms part of the mitochondrial fatty acid synthase (mtFAS). Beta-subunit of the KAR heterotetramer complex, responsible for the 3-ketoacyl-ACP reductase activity of the mtFAS, reduces 3-oxoacyl-[ACP] to (3R)-hydroxyacyl-[ACP] in a NADPH-dependent manner with no chain length preference, thereby participating in mitochondrial fatty acid biosynthesis. The homotetramer has NADPH-dependent quinone reductase activity (in vitro), hence could play a role in protection against cytotoxicity of exogenous quinones. As a heterotetramer, it can also reduce 9,10-phenanthrenequinone, 1,4-benzoquinone and various other o-quinones and p-quinones (in vitro). In Rattus norvegicus (Rat), this protein is 3-oxoacyl-[acyl-carrier-protein] reductase (Cbr4).